Here is a 269-residue protein sequence, read N- to C-terminus: Shikimate dehydrogenase (NADP(+)) (269 aa).

Shikimate contacts are provided by residues Ser-17 to Ser-19 and Thr-64. Lys-68 acts as the Proton acceptor in catalysis. Residue Glu-80 coordinates NADP(+). The shikimate site is built by Asn-89 and Asp-105. NADP(+) is bound by residues Gly-130–Ala-134, Asn-154–Lys-159, and Met-213. Tyr-215 lines the shikimate pocket. Gly-237 lines the NADP(+) pocket.

The protein belongs to the shikimate dehydrogenase family. Homodimer.

The enzyme catalyses shikimate + NADP(+) = 3-dehydroshikimate + NADPH + H(+). It participates in metabolic intermediate biosynthesis; chorismate biosynthesis; chorismate from D-erythrose 4-phosphate and phosphoenolpyruvate: step 4/7. Involved in the biosynthesis of the chorismate, which leads to the biosynthesis of aromatic amino acids. Catalyzes the reversible NADPH linked reduction of 3-dehydroshikimate (DHSA) to yield shikimate (SA). In Neisseria meningitidis serogroup C / serotype 2a (strain ATCC 700532 / DSM 15464 / FAM18), this protein is Shikimate dehydrogenase (NADP(+)).